The primary structure comprises 212 residues: Pyridoxine/pyridoxamine 5'-phosphate oxidase (212 aa).

Residues 8-11 (RREY) and lysine 66 contribute to the substrate site. Residues 61–66 (RIVLLK), 76–77 (FT), arginine 82, lysine 83, and glutamine 105 contribute to the FMN site. 3 residues coordinate substrate: tyrosine 123, arginine 127, and serine 131. Residues 140-141 (QS) and tryptophan 185 each bind FMN. 191–193 (RLH) contributes to the substrate binding site. FMN is bound at residue arginine 195.

It belongs to the pyridoxamine 5'-phosphate oxidase family. In terms of assembly, homodimer. FMN serves as cofactor.

The enzyme catalyses pyridoxamine 5'-phosphate + O2 + H2O = pyridoxal 5'-phosphate + H2O2 + NH4(+). It catalyses the reaction pyridoxine 5'-phosphate + O2 = pyridoxal 5'-phosphate + H2O2. It functions in the pathway cofactor metabolism; pyridoxal 5'-phosphate salvage; pyridoxal 5'-phosphate from pyridoxamine 5'-phosphate: step 1/1. Its pathway is cofactor metabolism; pyridoxal 5'-phosphate salvage; pyridoxal 5'-phosphate from pyridoxine 5'-phosphate: step 1/1. Its function is as follows. Catalyzes the oxidation of either pyridoxine 5'-phosphate (PNP) or pyridoxamine 5'-phosphate (PMP) into pyridoxal 5'-phosphate (PLP). In Shewanella sp. (strain MR-7), this protein is Pyridoxine/pyridoxamine 5'-phosphate oxidase.